A 183-amino-acid chain; its full sequence is Glutathione-regulated potassium-efflux system ancillary protein KefG (183 aa).

Belongs to the NAD(P)H dehydrogenase (quinone) family. KefG subfamily. In terms of assembly, interacts with KefB.

It is found in the cell inner membrane. It catalyses the reaction a quinone + NADH + H(+) = a quinol + NAD(+). The catalysed reaction is a quinone + NADPH + H(+) = a quinol + NADP(+). In terms of biological role, regulatory subunit of a potassium efflux system that confers protection against electrophiles. Required for full activity of KefB. This is Glutathione-regulated potassium-efflux system ancillary protein KefG from Shigella flexneri serotype 5b (strain 8401).